A 449-amino-acid chain; its full sequence is Putative recombination initiation defects 3 (449 aa).

Residues 21–56 (LRRSAEPQASQQLRSQQSQQSFSQGPSSSQRGCGGF) form a disordered region. The segment covering 28–50 (QASQQLRSQQSQQSFSQGPSSSQ) has biased composition (low complexity). Residues 437–441 (RTKRK) carry the Nuclear localization signal motif.

As to quaternary structure, interacts with PRD1; this interaction facilitates a binding to DFO.

Its subcellular location is the nucleus. Involved in DNA cleavage that forms the double-strand breaks (DSB) that initiate meiotic recombination. The protein is Putative recombination initiation defects 3 of Arabidopsis thaliana (Mouse-ear cress).